Here is a 122-residue protein sequence, read N- to C-terminus: Large ribosomal subunit protein bL12 (122 aa).

It belongs to the bacterial ribosomal protein bL12 family. In terms of assembly, homodimer. Part of the ribosomal stalk of the 50S ribosomal subunit. Forms a multimeric L10(L12)X complex, where L10 forms an elongated spine to which 2 to 4 L12 dimers bind in a sequential fashion. Binds GTP-bound translation factors.

In terms of biological role, forms part of the ribosomal stalk which helps the ribosome interact with GTP-bound translation factors. Is thus essential for accurate translation. The polypeptide is Large ribosomal subunit protein bL12 (Sulfurimonas denitrificans (strain ATCC 33889 / DSM 1251) (Thiomicrospira denitrificans (strain ATCC 33889 / DSM 1251))).